A 248-amino-acid polypeptide reads, in one-letter code: Probable phosphatase VCM66_A0854 (248 aa).

The Zn(2+) site is built by histidine 8, histidine 10, histidine 16, histidine 41, glutamate 74, histidine 102, histidine 132, aspartate 194, and histidine 196.

Belongs to the PHP family. Requires Zn(2+) as cofactor.

The polypeptide is Probable phosphatase VCM66_A0854 (Vibrio cholerae serotype O1 (strain M66-2)).